The chain runs to 366 residues: ERCC4 domain-containing protein EP364R (366 aa).

Residues 3 to 101 (FLVADHREHH…QLYFFVEGPA (99 aa)) enclose the ERCC4 domain.

The protein belongs to the asfivirus EP364R family.

Its function is as follows. Plays a role in the inhibition of type I interferon signaling pathway. Mechanistically, specifically interacts with 2',3'-cGAMP and cleaves it via its phosphodiesterase activity. In turn, prevents 2',3'-cGAMP interaction with host ER-resident STING1 leading to inhibition of downstream signaling pathway and type I interferon production. The sequence is that of ERCC4 domain-containing protein EP364R from African swine fever virus (isolate Pig/Kenya/KEN-50/1950) (ASFV).